A 220-amino-acid chain; its full sequence is Aspartic protease inhibitor 5 (220 aa).

An N-terminal signal peptide occupies residues 1–23 (MMKCLFLLCLCLLPIVVFSSTFT). Residues 24-32 (SQNLIDLPS) constitute a propeptide that is removed on maturation. The Vacuolar targeting signal motif lies at 26-31 (NLIDLP). Asn51 carries an N-linked (GlcNAc...) asparagine glycan. 2 cysteine pairs are disulfide-bonded: Cys80–Cys125 and Cys174–Cys185.

The protein belongs to the protease inhibitor I3 (leguminous Kunitz-type inhibitor) family.

Its subcellular location is the vacuole. Inhibitor of cathepsin D (aspartic protease). May also inhibit trypsin and chymotrypsin (serine proteases). Protects the plant by inhibiting proteases of invading organisms. This Solanum tuberosum (Potato) protein is Aspartic protease inhibitor 5.